The primary structure comprises 57 residues: Large ribosomal subunit protein bL33 (57 aa).

Belongs to the bacterial ribosomal protein bL33 family.

The chain is Large ribosomal subunit protein bL33 from Shewanella halifaxensis (strain HAW-EB4).